We begin with the raw amino-acid sequence, 369 residues long: Ribonuclease D (369 aa).

The 3'-5' exonuclease domain maps to Met1–Val166. The 80-residue stretch at Arg206 to Ala285 folds into the HRDC domain.

This sequence belongs to the RNase D family. A divalent metal cation serves as cofactor.

The protein localises to the cytoplasm. It catalyses the reaction Exonucleolytic cleavage that removes extra residues from the 3'-terminus of tRNA to produce 5'-mononucleotides.. Its function is as follows. Exonuclease involved in the 3' processing of various precursor tRNAs. Initiates hydrolysis at the 3'-terminus of an RNA molecule and releases 5'-mononucleotides. This is Ribonuclease D from Cronobacter turicensis (strain DSM 18703 / CCUG 55852 / LMG 23827 / z3032).